The primary structure comprises 1159 residues: Anillin-like protein 1 (1159 aa).

Disordered stretches follow at residues 43–81 (VASP…MKEN), 266–327 (QQVS…TKTT), 409–430 (KLKK…APVP), 549–608 (AIPK…GDVI), and 629–699 (FGFM…KSSS). Over residues 50-60 (FGSSSKCNDGP) the composition is skewed to polar residues. Residues 287 to 327 (ASSATSSSSSTTTLTTISGASGSTTSGISNAPQDSASTKTT) show a composition bias toward low complexity. Pro residues predominate over residues 421–430 (PPAPTSAPVP). A compositionally biased stretch (polar residues) spans 564 to 584 (SASSLYSQGARSNTASPASKS). The segment covering 660-684 (VIEEETENEDESEPYEPEEEEDDDA) has biased composition (acidic residues). Residues 1029 to 1147 (DITYHGFLSM…WLSLINSTSK (119 aa)) form the PH domain.

In terms of tissue distribution, strongly expressed in dividing neuroblasts under the ventral epidermal cells during ventral enclosure.

Its subcellular location is the cytoplasm. The protein localises to the cell cortex. The protein resides in the cytoskeleton. It localises to the spindle. It is found in the midbody. Its subcellular location is the cleavage furrow. Required for contractile events in embryos that occur prior to mitosis, such as cortical ruffling and pseudocleavage. Promotes membrane ruffling by organizing cortical patches of septins and myosin II. Not generally required for cytokinesis in mitotic cells. Required for the asymmetric cleavage events that extrude the two polar bodies during oocyte meiosis. Not required for meiotic contractile ring assembly, initiation or closure but is required for the transformation of the contractile ring from a disk above the spindle to a tube around the spindle midzone. Promotes astral microtubule-directed cortical myosin polarization and cleavage furrow ingression. Regulates neuroblast cytokinesis during mid- to late-embryogenesis and is required for ventral enclosure. The polypeptide is Anillin-like protein 1 (ani-1) (Caenorhabditis elegans).